The sequence spans 435 residues: Probable long-chain-alcohol O-fatty-acyltransferase 11 (435 aa).

The next 11 membrane-spanning stretches (helical) occupy residues 7–27 (NLIKVSVSVIISISYCYYVPT), 36–56 (FLSVLPICALFRVLPLFFASV), 59–79 (SGYTALFISWLANFKLILFSF), 120–140 (PIEVLFSNQFVTKVVILSVVL), 149–169 (IYPIVLFVLYPLHLYLVLEIL), 200–220 (DFWGHWWTLMLPTILLPDVYA), 238–258 (LGVFVTFLVSGALHEFLFFYI), 263–283 (PTGEVTLFFVLHGVCIVAYDA), 300–320 (CLILQVMVMGFVVVTAGWLFF), 363–383 (FFTGFVMRKLFNGALFFIGFV), and 406–426 (FFIGFVIRKLFNEAMFFIGFV).

This sequence belongs to the wax synthase family.

The protein localises to the membrane. The enzyme catalyses a long chain fatty alcohol + a fatty acyl-CoA = a wax ester + CoA. Functionally, catalyzes the final step in the synthesis of long-chain linear esters (waxes). This chain is Probable long-chain-alcohol O-fatty-acyltransferase 11, found in Arabidopsis thaliana (Mouse-ear cress).